Reading from the N-terminus, the 122-residue chain is UPF0145 protein BamMC406_5002 (122 aa).

This sequence belongs to the UPF0145 family.

This Burkholderia ambifaria (strain MC40-6) protein is UPF0145 protein BamMC406_5002.